The sequence spans 149 residues: Large ribosomal subunit protein uL13 (149 aa).

The protein belongs to the universal ribosomal protein uL13 family. Part of the 50S ribosomal subunit.

Functionally, this protein is one of the early assembly proteins of the 50S ribosomal subunit, although it is not seen to bind rRNA by itself. It is important during the early stages of 50S assembly. This Chlorobium limicola (strain DSM 245 / NBRC 103803 / 6330) protein is Large ribosomal subunit protein uL13.